The following is a 792-amino-acid chain: Phenylalanine--tRNA ligase beta subunit (792 aa).

In terms of domain architecture, tRNA-binding spans 39 to 150 (APAFHKVVVA…PDAPVGTDFR (112 aa)). Residues 405-480 (PARDPIRLGL…RMYGYNRIAA (76 aa)) form the B5 domain. 4 residues coordinate Mg(2+): Asp-458, Asp-464, Glu-467, and Glu-468. The FDX-ACB domain maps to 698 to 791 (SKYPPIRRDI…LENRFGARLR (94 aa)).

This sequence belongs to the phenylalanyl-tRNA synthetase beta subunit family. Type 1 subfamily. Tetramer of two alpha and two beta subunits. Mg(2+) is required as a cofactor.

It is found in the cytoplasm. It catalyses the reaction tRNA(Phe) + L-phenylalanine + ATP = L-phenylalanyl-tRNA(Phe) + AMP + diphosphate + H(+). In Nitrosospira multiformis (strain ATCC 25196 / NCIMB 11849 / C 71), this protein is Phenylalanine--tRNA ligase beta subunit.